Reading from the N-terminus, the 709-residue chain is Frizzled-6 (709 aa).

The N-terminal stretch at 1–18 (MERSPFLLACILLPLVRG) is a signal peptide. Positions 19 to 132 (HSLFTCEPIT…CNRLPHCDDT (114 aa)) constitute an FZ domain. At 19–201 (HSLFTCEPIT…SDELDFAKSF (183 aa)) the chain is on the extracellular side. 5 disulfide bridges follow: C24/C85, C32/C78, C69/C106, C95/C129, and C99/C123. N38 carries N-linked (GlcNAc...) asparagine glycosylation. The helical transmembrane segment at 202–222 (IGIVSIFCLCATLFTFLTFLI) threads the bilayer. The Cytoplasmic segment spans residues 223 to 233 (DVRRFRYPERP). Residues 234–254 (IIYYSVCYSIVSLMYFVGFLL) traverse the membrane as a helical segment. The Extracellular portion of the chain corresponds to 255–284 (GNSTACNKADEKLELGDTVVLGSKNKACSV). The N-linked (GlcNAc...) asparagine glycan is linked to N256. The chain crosses the membrane as a helical span at residues 285 to 305 (VFMFLYFFTMAGTVWWVILTI). Residues 306 to 324 (TWFLAAGRKWSCEAIEQKA) lie on the Cytoplasmic side of the membrane. The helical transmembrane segment at 325–345 (VWFHAVAWGAPGFLTVMLLAM) threads the bilayer. The Extracellular segment spans residues 346-370 (NKVEGDNISGVCFVGLYDLDASRYF). The N-linked (GlcNAc...) asparagine glycan is linked to N352. A helical transmembrane segment spans residues 371–391 (VLLPLCLCVFVGLSLLLAGII). The Cytoplasmic segment spans residues 392 to 416 (SLNHVRQVIQHDGRNQEKLKKFMIR). A helical transmembrane segment spans residues 417 to 437 (IGVFSGLYLVPLVTLLGCYVY). Residues 438-473 (ELVNRITWEMTWFSDHCHQYRIPCPYQANPKARPEL) are Extracellular-facing. Residues 474–494 (ALFMIKYLMTLIVGISAVFWV) form a helical membrane-spanning segment. Topologically, residues 495–709 (GSKKTCTEWA…EQGAGSHSDA (215 aa)) are cytoplasmic. The short motif at 498–503 (KTCTEW) is the Lys-Thr-X-X-X-Trp motif, mediates interaction with the PDZ domain of Dvl family members element. Positions 583-594 (QETSTEVHTSPE) are enriched in polar residues. Positions 583–709 (QETSTEVHTS…EQGAGSHSDA (127 aa)) are disordered. The span at 596-616 (SVKEGRADRANTPSAKDRDCG) shows a compositional bias: basic and acidic residues. The segment covering 620–629 (GPSSKLSGNR) has biased composition (polar residues). Over residues 630-644 (NGRESRAGGLKERSN) the composition is skewed to basic and acidic residues. Position 656 is a phosphoserine (S656). Positions 669 to 690 (CSTSQAASSPEPTSLKGSTSLP) are enriched in polar residues. Positions 697–709 (ARKEQGAGSHSDA) are enriched in basic and acidic residues.

This sequence belongs to the G-protein coupled receptor Fz/Smo family. Interacts with LMBR1L. In terms of processing, ubiquitinated by ZNRF3, leading to its degradation by the proteasome. As to expression, expressed in both hair cells and supporting cells in the utricle, saccule, cristae and the organ of Corti in the inner ear (at protein level).

Its subcellular location is the membrane. The protein localises to the cell membrane. It is found in the cell surface. It localises to the apical cell membrane. The protein resides in the cytoplasmic vesicle membrane. Its subcellular location is the endoplasmic reticulum membrane. Its function is as follows. Receptor for Wnt proteins. Most of frizzled receptors are coupled to the beta-catenin canonical signaling pathway, which leads to the activation of disheveled proteins, inhibition of GSK-3 kinase, nuclear accumulation of beta-catenin and activation of Wnt target genes. A second signaling pathway involving PKC and calcium fluxes has been seen for some family members, but it is not yet clear if it represents a distinct pathway or if it can be integrated in the canonical pathway, as PKC seems to be required for Wnt-mediated inactivation of GSK-3 kinase. Both pathways seem to involve interactions with G-proteins. Activation by Wnt5A stimulates PKC activity via a G-protein-dependent mechanism. Involved in transduction and intercellular transmission of polarity information during tissue morphogenesis and/or in differentiated tissues. Together with FZD3, is involved in the neural tube closure and plays a role in the regulation of the establishment of planar cell polarity (PCP), particularly in the orientation of asymmetric bundles of stereocilia on the apical faces of a subset of auditory and vestibular sensory cells located in the inner ear. The sequence is that of Frizzled-6 (Fzd6) from Mus musculus (Mouse).